The sequence spans 135 residues: UPF0251 protein Hore_18270 (135 aa).

This sequence belongs to the UPF0251 family.

The polypeptide is UPF0251 protein Hore_18270 (Halothermothrix orenii (strain H 168 / OCM 544 / DSM 9562)).